Reading from the N-terminus, the 413-residue chain is Isobutyryl-CoA dehydrogenase, mitochondrial (413 aa).

The transit peptide at 1 to 20 (MAMLRSGYRRFGCLRAALKS) directs the protein to the mitochondrion. Lys-48 carries the N6-acetyllysine; alternate modification. Lys-48 is modified (N6-succinyllysine; alternate). FAD-binding positions include 156–165 (YCLTEPGSGS) and 189–191 (FIS). Residue Ser-165 participates in substrate binding. Lys-211 is modified (N6-succinyllysine). Position 229 is an N6-acetyllysine (Lys-229). Lys-269 is modified (N6-succinyllysine). 272–275 (NGGR) is a substrate binding site. FAD-binding positions include Arg-300, 310–311 (SQ), and 369–373 (QMHGG). The active-site Proton acceptor is Glu-396. 398–400 (SNE) serves as a coordination point for FAD. Arg-408 serves as a coordination point for substrate.

The protein belongs to the acyl-CoA dehydrogenase family. Homotetramer, formed by a dimer of dimers. Requires FAD as cofactor.

It localises to the mitochondrion. It catalyses the reaction 2-methylpropanoyl-CoA + oxidized [electron-transfer flavoprotein] + H(+) = 2-methylpropenoyl-CoA + reduced [electron-transfer flavoprotein]. The catalysed reaction is (2S)-2-methylbutanoyl-CoA + oxidized [electron-transfer flavoprotein] + H(+) = (2E)-2-methylbut-2-enoyl-CoA + reduced [electron-transfer flavoprotein]. The enzyme catalyses propanoyl-CoA + oxidized [electron-transfer flavoprotein] + H(+) = acryloyl-CoA + reduced [electron-transfer flavoprotein]. The protein operates within amino-acid degradation; L-valine degradation. Isobutyryl-CoA dehydrogenase which catalyzes the conversion of 2-methylpropanoyl-CoA to (2E)-2-methylpropenoyl-CoA in the valine catabolic pathway. To a lesser extent, also able to catalyze the oxidation of (2S)-2-methylbutanoyl-CoA. The protein is Isobutyryl-CoA dehydrogenase, mitochondrial of Mus musculus (Mouse).